Reading from the N-terminus, the 319-residue chain is Ornithine carbamoyltransferase (319 aa).

Carbamoyl phosphate-binding positions include 57–60 (STRT), glutamine 84, arginine 108, and 135–138 (HPCQ). L-ornithine-binding positions include asparagine 166, aspartate 230, and 234-235 (SM). Carbamoyl phosphate-binding positions include 270–271 (CL) and arginine 298.

This sequence belongs to the aspartate/ornithine carbamoyltransferase superfamily. OTCase family.

The protein resides in the cytoplasm. It catalyses the reaction carbamoyl phosphate + L-ornithine = L-citrulline + phosphate + H(+). The protein operates within amino-acid biosynthesis; L-arginine biosynthesis; L-arginine from L-ornithine and carbamoyl phosphate: step 1/3. Reversibly catalyzes the transfer of the carbamoyl group from carbamoyl phosphate (CP) to the N(epsilon) atom of ornithine (ORN) to produce L-citrulline. The chain is Ornithine carbamoyltransferase (argF) from Bacillus subtilis (strain 168).